A 415-amino-acid polypeptide reads, in one-letter code: MERLLHMTFRNKKIHLNVGTIGHFSHGKTTLTAAITAVLAGIGYTQPKQNDAIDSTSEEKARNMSIYVHHVEYETAARHYSHLDCPGHVNYINNMITGVSQMDGAILVVSAVDGPMAQTKEHILLAKLLGISSILVFINKEDELDDQEVLPMLIQNMRQILIYYGFPGHTSPILCGSALLALEAMNENPNFNRGKNKWVDKISSLIDHLDLYLPTPRRKLNKPFLMPIERVILIPSFGLVGTGTIEKGHINIGESVEIVGFKDTQHSKVISLKMFNKTLEQAIAGDDIGIFLEGTNKNNFQKGMVIAKPNTIQSWNHFEAQIYILRREEGGRRSPFFQGYCPQFYFRTIQITGRMESFEYEIGGKTWMVMPGEKIKAIIQLIFPIALKKKMRFVIREGGFTIGVGIILELIKIKN.

In terms of domain architecture, tr-type G spans 13–217 (KIHLNVGTIG…HLDLYLPTPR (205 aa)). A G1 region spans residues 22-29 (GHFSHGKT). Position 22-29 (22-29 (GHFSHGKT)) interacts with GTP. Thr-29 contributes to the Mg(2+) binding site. Residues 63–67 (NMSIY) form a G2 region. The tract at residues 84–87 (DCPG) is G3. Residues 84–88 (DCPGH) and 139–142 (NKED) contribute to the GTP site. Residues 139–142 (NKED) form a G4 region. The segment at 177 to 179 (SAL) is G5.

Belongs to the TRAFAC class translation factor GTPase superfamily. Classic translation factor GTPase family. EF-Tu/EF-1A subfamily.

The protein resides in the plastid. The protein localises to the chloroplast. The catalysed reaction is GTP + H2O = GDP + phosphate + H(+). Its function is as follows. GTP hydrolase that promotes the GTP-dependent binding of aminoacyl-tRNA to the A-site of ribosomes during protein biosynthesis. The polypeptide is Elongation factor Tu, chloroplastic (tufA) (Coleochaete orbicularis (Charophycean green alga)).